Reading from the N-terminus, the 491-residue chain is Endoglucanase 14 (491 aa).

Residues 1 to 31 (MSQLKIGSSQCLWTSICIVLFVLSMARGAVS) form the signal peptide. The Nucleophile role is filled by D86. A glycan (N-linked (GlcNAc...) asparagine) is linked at N397. Active-site residues include H413, D465, and E474.

This sequence belongs to the glycosyl hydrolase 9 (cellulase E) family.

Its subcellular location is the secreted. The catalysed reaction is Endohydrolysis of (1-&gt;4)-beta-D-glucosidic linkages in cellulose, lichenin and cereal beta-D-glucans.. This is Endoglucanase 14 from Arabidopsis thaliana (Mouse-ear cress).